The chain runs to 204 residues: Altered inheritance of mitochondria protein 20 (204 aa).

Residues 6–26 (VAVGTAVGIPIAVGVIIALIF) traverse the membrane as a helical segment.

The protein belongs to the SKG1 family.

The protein localises to the vacuole membrane. In terms of biological role, involved in cell cycle progression and surviving DNA damage. This is Altered inheritance of mitochondria protein 20 (AIM20) from Saccharomyces cerevisiae (strain RM11-1a) (Baker's yeast).